A 201-amino-acid polypeptide reads, in one-letter code: DeSI-like protein sdu1 (201 aa).

Residues 1-143 (MKVYINVYDL…AFPTITNALL (143 aa)) enclose the PPPDE domain. Active-site residues include His-29 and Cys-105. The segment at 146-201 (GQKNTSDVDDSSDSSSDVDEETLIVSKSKKAHKDIPKFSAPPPSADLNNLITDSLP) is disordered. The segment covering 152–167 (DVDDSSDSSSDVDEET) has biased composition (acidic residues). Residues 191 to 201 (DLNNLITDSLP) show a composition bias toward polar residues.

The protein belongs to the DeSI family.

It is found in the cytoplasm. In terms of biological role, has a role in meiosis. The protein is DeSI-like protein sdu1 (sdu1) of Schizosaccharomyces pombe (strain 972 / ATCC 24843) (Fission yeast).